Consider the following 445-residue polypeptide: Tubby-like F-box protein 10 (445 aa).

The 56-residue stretch at 57-112 (SRWANLPPELLFDVIKRLEESESNWPARKHVVACASVCRSWRAMCQEIVLGPEICG) folds into the F-box domain. Low complexity predominate over residues 382–398 (PQPQGTGAAAAPTSAPA). The interval 382–401 (PQPQGTGAAAAPTSAPAHPE) is disordered.

Belongs to the TUB family. As to quaternary structure, part of a SCF (ASK-cullin-F-box) protein ligase complex. Interacts with SKP1A/ASK1. Ubiquitous.

Its subcellular location is the nucleus. Its pathway is protein modification; protein ubiquitination. Its function is as follows. Component of SCF(ASK-cullin-F-box) E3 ubiquitin ligase complexes, which may mediate the ubiquitination and subsequent proteasomal degradation of target proteins. The chain is Tubby-like F-box protein 10 from Arabidopsis thaliana (Mouse-ear cress).